Consider the following 962-residue polypeptide: Protease 3 (962 aa).

The signal sequence occupies residues 1–23; sequence MPRSTWFKALLLLVALWAPLSQA. H88 is a Zn(2+) binding site. The active-site Proton acceptor is the E91. Zn(2+) contacts are provided by H92 and E169.

Belongs to the peptidase M16 family. Monomer. Requires Zn(2+) as cofactor.

The protein resides in the periplasm. It carries out the reaction Preferential cleavage of 16-Tyr-|-Leu-17 and 25-Phe-|-Tyr-26 bonds of oxidized insulin B chain. Also acts on other substrates of Mw less than 7 kDa such as insulin and glucagon.. Its function is as follows. Endopeptidase that degrades small peptides of less than 7 kDa, such as glucagon and insulin. In Escherichia coli O157:H7, this protein is Protease 3 (ptrA).